A 432-amino-acid chain; its full sequence is D-amino acid dehydrogenase (432 aa).

Residue 3–17 coordinates FAD; the sequence is VLVLGSGVVGTASAY.

The protein belongs to the DadA oxidoreductase family. The cofactor is FAD.

It carries out the reaction a D-alpha-amino acid + A + H2O = a 2-oxocarboxylate + AH2 + NH4(+). The protein operates within amino-acid degradation; D-alanine degradation; NH(3) and pyruvate from D-alanine: step 1/1. Functionally, oxidative deamination of D-amino acids. This Stutzerimonas stutzeri (strain A1501) (Pseudomonas stutzeri) protein is D-amino acid dehydrogenase.